The following is a 900-amino-acid chain: Bifunctional uridylyltransferase/uridylyl-removing enzyme (900 aa).

The segment at 1-342 (MPQVDPELFD…PCEQPVQIQP (342 aa)) is uridylyltransferase. Positions 343-705 (LNSRFQLRDG…TTQREFESGS (363 aa)) are uridylyl-removing. The region spanning 461 to 583 (VDAHTLNLIK…VGDQTHLDYL (123 aa)) is the HD domain. 2 consecutive ACT domains span residues 706–789 (QIFI…IIQR) and 816–891 (VLEV…DNGR).

Belongs to the GlnD family. Mg(2+) is required as a cofactor.

The enzyme catalyses [protein-PII]-L-tyrosine + UTP = [protein-PII]-uridylyl-L-tyrosine + diphosphate. The catalysed reaction is [protein-PII]-uridylyl-L-tyrosine + H2O = [protein-PII]-L-tyrosine + UMP + H(+). Uridylyltransferase (UTase) activity is inhibited by glutamine, while glutamine activates uridylyl-removing (UR) activity. Modifies, by uridylylation and deuridylylation, the PII regulatory proteins (GlnB and homologs), in response to the nitrogen status of the cell that GlnD senses through the glutamine level. Under low glutamine levels, catalyzes the conversion of the PII proteins and UTP to PII-UMP and PPi, while under higher glutamine levels, GlnD hydrolyzes PII-UMP to PII and UMP (deuridylylation). Thus, controls uridylylation state and activity of the PII proteins, and plays an important role in the regulation of nitrogen assimilation and metabolism. This chain is Bifunctional uridylyltransferase/uridylyl-removing enzyme, found in Pseudomonas aeruginosa (strain LESB58).